A 135-amino-acid chain; its full sequence is MQTYLFASGLVLFLLGLVTGLLVPVSKNPRMGVAGHLQGMTNGPLLIIAGLLWPYLELPDAWQLATFWLLIYGTYANWLGVQLAALWGAGAKLAPIAAGEHRSTPLKERVVTFLLFSLIPAMFAAPIILLIGILR.

The next 4 helical transmembrane spans lie at 5–25 (LFAS…LVPV), 33–55 (VAGH…LWPY), 67–87 (FWLL…AALW), and 113–133 (FLLF…LIGI).

It is found in the cell membrane. The enzyme catalyses N-phenylhydroxylamine = 2-aminophenol. Functionally, catalyzes the rearrangement of hydroxylaminobenzene to 2-aminophenol. Involved in the degradation of nitrobenzene. This chain is Hydroxylaminobenzene mutase HabA (habA), found in Ectopseudomonas oleovorans (Pseudomonas oleovorans).